Consider the following 292-residue polypeptide: Ribosomal protein L11 methyltransferase (292 aa).

S-adenosyl-L-methionine contacts are provided by Thr144, Gly165, Asp187, and Asn229.

This sequence belongs to the methyltransferase superfamily. PrmA family.

The protein localises to the cytoplasm. The enzyme catalyses L-lysyl-[protein] + 3 S-adenosyl-L-methionine = N(6),N(6),N(6)-trimethyl-L-lysyl-[protein] + 3 S-adenosyl-L-homocysteine + 3 H(+). In terms of biological role, methylates ribosomal protein L11. This Pseudomonas putida (strain W619) protein is Ribosomal protein L11 methyltransferase.